The sequence spans 140 residues: Putative pre-16S rRNA nuclease (140 aa).

Belongs to the YqgF nuclease family.

The protein resides in the cytoplasm. Functionally, could be a nuclease involved in processing of the 5'-end of pre-16S rRNA. The polypeptide is Putative pre-16S rRNA nuclease (Vibrio cholerae serotype O1 (strain ATCC 39541 / Classical Ogawa 395 / O395)).